The following is a 418-amino-acid chain: Serine hydroxymethyltransferase (418 aa).

Residues Leu121 and 125–127 (GHL) each bind (6S)-5,6,7,8-tetrahydrofolate. The residue at position 230 (Lys230) is an N6-(pyridoxal phosphate)lysine. Residues Glu246 and 355–357 (SPF) contribute to the (6S)-5,6,7,8-tetrahydrofolate site.

Belongs to the SHMT family. In terms of assembly, homodimer. Pyridoxal 5'-phosphate is required as a cofactor.

It localises to the cytoplasm. The catalysed reaction is (6R)-5,10-methylene-5,6,7,8-tetrahydrofolate + glycine + H2O = (6S)-5,6,7,8-tetrahydrofolate + L-serine. It participates in one-carbon metabolism; tetrahydrofolate interconversion. It functions in the pathway amino-acid biosynthesis; glycine biosynthesis; glycine from L-serine: step 1/1. Its function is as follows. Catalyzes the reversible interconversion of serine and glycine with tetrahydrofolate (THF) serving as the one-carbon carrier. This reaction serves as the major source of one-carbon groups required for the biosynthesis of purines, thymidylate, methionine, and other important biomolecules. Also exhibits THF-independent aldolase activity toward beta-hydroxyamino acids, producing glycine and aldehydes, via a retro-aldol mechanism. The polypeptide is Serine hydroxymethyltransferase (Streptococcus pneumoniae serotype 19F (strain G54)).